The chain runs to 597 residues: Bromodomain-containing protein 9 (597 aa).

Residues 1-10 (MGKKHKKHKA) show a composition bias toward basic residues. 2 disordered regions span residues 1–25 (MGKK…KPLE) and 38–138 (EVTE…ENES). Basic and acidic residues-rich tracts occupy residues 11–25 (EWRS…KPLE) and 50–62 (SYYD…ERER). Ser-56 is subject to Phosphoserine. A compositionally biased stretch (basic residues) spans 63 to 73 (HKEKKKKKKKK). Residues 74–85 (SEKEKHLDDEER) show a composition bias toward basic and acidic residues. Residues 86 to 97 (RKRKEEKKRKRE) show a composition bias toward basic residues. The segment covering 111-126 (DPGKKVEVEPPPDRPV) has biased composition (basic and acidic residues). Positions 136–240 (NESTPIQQLL…HAGFKMMSKQ (105 aa)) constitute a Bromo domain. The interval 214 to 216 (TYN) is histone H4K5ac H4K8ac and histone H4K5bu H4K8bu binding. Lys-373 is modified (N6-acetyllysine; alternate). Lys-373 participates in a covalent cross-link: Glycyl lysine isopeptide (Lys-Gly) (interchain with G-Cter in SUMO2); alternate. The tract at residues 536 to 597 (EAQAERGGSR…SPEPAASAKT (62 aa)) is disordered. Positions 544–556 (SRPSSNLSSLSNA) are enriched in low complexity. Phosphoserine is present on residues Ser-566 and Ser-588.

In terms of assembly, binds acetylated histones H3 and H4. Binds butyrylated histone H4. Component of the multiprotein chromatin-remodeling subcomplex SWI/SNF called GBAF, which includes at least BICRA or BICRAL (mutually exclusive), BRD9, SS18, the core BAF subunits, SMARCA2/BRM, SMARCA4/BRG1/BAF190A, ACTL6A/BAF53, SMARCC1/BAF155, and SMARCD1/BAF60A. Interacts (via N-terminal bromodomain) with acetylated RAD54. Interacts (via C-terminus) with RAD51.

The protein resides in the nucleus. Functionally, plays a role in chromatin remodeling and regulation of transcription. Acts as a chromatin reader that recognizes and binds acylated histones: binds histones that are acetylated and/or butyrylated. Component of SWI/SNF chromatin remodeling subcomplex GBAF that carries out key enzymatic activities, changing chromatin structure by altering DNA-histone contacts within a nucleosome in an ATP-dependent manner. Also orchestrates the RAD51-RAD54 complex formation and thereby plays a role in homologous recombination (HR). This chain is Bromodomain-containing protein 9 (BRD9), found in Homo sapiens (Human).